The following is a 292-amino-acid chain: Ribosomal protein L11 methyltransferase (292 aa).

Positions 136, 159, 181, and 228 each coordinate S-adenosyl-L-methionine.

Belongs to the methyltransferase superfamily. PrmA family.

Its subcellular location is the cytoplasm. The enzyme catalyses L-lysyl-[protein] + 3 S-adenosyl-L-methionine = N(6),N(6),N(6)-trimethyl-L-lysyl-[protein] + 3 S-adenosyl-L-homocysteine + 3 H(+). Functionally, methylates ribosomal protein L11. The sequence is that of Ribosomal protein L11 methyltransferase from Rhizobium etli (strain CIAT 652).